The sequence spans 110 residues: ORC1-type DNA replication protein 3 (110 aa).

An ATP-binding site is contributed by 8-12; that stretch reads SGKSL.

It belongs to the CDC6/cdc18 family.

Involved in regulation of DNA replication. In Halobacterium salinarum (strain ATCC 700922 / JCM 11081 / NRC-1) (Halobacterium halobium), this protein is ORC1-type DNA replication protein 3 (orc3).